The sequence spans 563 residues: Membrane protein insertase YidC (563 aa).

A helical membrane pass occupies residues 1–21 (MDIKRTILIVALAIVTYVGVL). Positions 43 to 62 (APGIPDTAAGTNGSASADVP) are disordered. 5 consecutive transmembrane segments (helical) span residues 344–364 (LELT…FWLL), 370–390 (ILGN…GLFF), 440–460 (LGGC…YWVL), 471–491 (WILW…PIIM), and 518–538 (PIIF…YWVV).

The protein belongs to the OXA1/ALB3/YidC family. Type 1 subfamily. As to quaternary structure, interacts with the Sec translocase complex via SecD. Specifically interacts with transmembrane segments of nascent integral membrane proteins during membrane integration.

Its subcellular location is the cell inner membrane. Required for the insertion and/or proper folding and/or complex formation of integral membrane proteins into the membrane. Involved in integration of membrane proteins that insert both dependently and independently of the Sec translocase complex, as well as at least some lipoproteins. Aids folding of multispanning membrane proteins. The protein is Membrane protein insertase YidC of Pseudomonas savastanoi pv. phaseolicola (strain 1448A / Race 6) (Pseudomonas syringae pv. phaseolicola (strain 1448A / Race 6)).